Here is a 1712-residue protein sequence, read N- to C-terminus: Probable ATP-dependent RNA helicase DDX60 (1712 aa).

The 168-residue stretch at 772 to 939 (LDVVDKNESA…WLQSVKWYWK (168 aa)) folds into the Helicase ATP-binding domain. 785-792 (APTSSGKT) serves as a coordination point for ATP. Positions 889–892 (DEVH) match the DEVH box motif. The Helicase C-terminal domain maps to 1226 to 1370 (YADQKAVDTE…HFPLSITLVL (145 aa)).

This sequence belongs to the helicase family. In terms of assembly, interacts with EXOSC1, EXOSC4, RIGI, IFIH1/MDA5 and DHX58/LGP2. As to expression, brain, lymph node, prostate, stomach, thyroid, tongue, trachea, uterus, skeletal muscle, spleen, kidney, liver and small intestine.

The protein localises to the cytoplasm. The enzyme catalyses ATP + H2O = ADP + phosphate + H(+). Functionally, positively regulates RIGI- and IFIH1/MDA5-dependent type I interferon and interferon inducible gene expression in response to viral infection. Binds ssRNA, dsRNA and dsDNA and can promote the binding of RIGI to dsRNA. Exhibits antiviral activity against hepatitis C virus and vesicular stomatitis virus (VSV). In Homo sapiens (Human), this protein is Probable ATP-dependent RNA helicase DDX60 (DDX60).